The chain runs to 584 residues: N(6)-adenosine-methyltransferase subunit METTL3 (584 aa).

2 disordered regions span residues 1 to 65 (MSDT…EHPP) and 162 to 221 (KADD…SNKV). The segment covering 187–204 (RKSSVSLATASISQLTAS) has biased composition (polar residues). Positions 213–220 (DKKGRSNK) match the Nuclear localization signal motif. S-adenosyl-L-methionine contacts are provided by residues 381–382 (DI) and Asp399. A gate loop 1 region spans residues 400–414 (PPWDIHMELPYGTLT). Interaction with METTL14 regions lie at residues 454 to 458 (DRVDE) and 468 to 484 (QRII…NHGK). An interphase loop region spans residues 466 to 483 (QLQRIIRTGRTGHWLNHG). Residues 469–482 (RIIRTGRTGHWLNH) are positively charged region required for RNA-binding. The segment at 511-519 (VRSTSHKPD) is gate loop 2. Residues Lys517, 540–543 (RPHN), and 553–554 (NQ) each bind S-adenosyl-L-methionine.

Belongs to the MT-A70-like family. As to quaternary structure, heterodimer; heterodimerizes with mettl14 to form an antiparallel heterodimer that constitutes an active methyltransferase. Component of the WMM complex, a N6-methyltransferase complex composed of a catalytic subcomplex, named MAC, and of an associated subcomplex, named MACOM. The MAC subcomplex is composed of mettl3 and mettl14. As to expression, expressed in the hemato-vascular system: enriched in sorted endothelial cells and haemogenic endothelium.

The protein localises to the nucleus. It localises to the nucleus speckle. It is found in the cytoplasm. It carries out the reaction an adenosine in mRNA + S-adenosyl-L-methionine = an N(6)-methyladenosine in mRNA + S-adenosyl-L-homocysteine + H(+). In terms of biological role, the METTL3-METTL14 heterodimer forms a N6-methyltransferase complex that methylates adenosine residues at the N(6) position of some RNAs and regulates various processes such as the circadian clock, differentiation of embryonic and hematopoietic stem cells, cortical neurogenesis, response to DNA damage, differentiation of T-cells and primary miRNA processing. In the heterodimer formed with mettl14, mettl3 constitutes the catalytic core. N6-methyladenosine (m6A), which takes place at the 5'-[AG]GAC-3' consensus sites of some mRNAs, plays a role in mRNA stability, processing and translation efficiency. M6A is also involved in hematopoietic stem cells specification: m6A methylation and subsequent destabilization of mRNAs, such as notch1a, leads to decreased Notch signaling, promoting endothelial to hematopoietic transition. M6A also takes place in other RNA molecules, such as primary miRNA (pri-miRNAs). Mediates methylation of pri-miRNAs. This Danio rerio (Zebrafish) protein is N(6)-adenosine-methyltransferase subunit METTL3.